We begin with the raw amino-acid sequence, 214 residues long: GTP cyclohydrolase 1 (214 aa).

Zn(2+) contacts are provided by Cys108, His111, and Cys179.

The protein belongs to the GTP cyclohydrolase I family. Toroid-shaped homodecamer, composed of two pentamers of five dimers.

The catalysed reaction is GTP + H2O = 7,8-dihydroneopterin 3'-triphosphate + formate + H(+). The protein operates within cofactor biosynthesis; 7,8-dihydroneopterin triphosphate biosynthesis; 7,8-dihydroneopterin triphosphate from GTP: step 1/1. The chain is GTP cyclohydrolase 1 from Shewanella putrefaciens (strain CN-32 / ATCC BAA-453).